Consider the following 440-residue polypeptide: Xaa-Pro dipeptidase (440 aa).

Residues D246, D257, H337, E382, and E421 each contribute to the Mn(2+) site.

This sequence belongs to the peptidase M24B family. Bacterial-type prolidase subfamily. It depends on Mn(2+) as a cofactor.

It carries out the reaction Xaa-L-Pro dipeptide + H2O = an L-alpha-amino acid + L-proline. In terms of biological role, splits dipeptides with a prolyl residue in the C-terminal position. The chain is Xaa-Pro dipeptidase from Aeromonas hydrophila subsp. hydrophila (strain ATCC 7966 / DSM 30187 / BCRC 13018 / CCUG 14551 / JCM 1027 / KCTC 2358 / NCIMB 9240 / NCTC 8049).